Consider the following 225-residue polypeptide: Orotate phosphoribosyltransferase (225 aa).

Residue Lys-31 participates in 5-phospho-alpha-D-ribose 1-diphosphate binding. 39-40 (FF) serves as a coordination point for orotate. 5-phospho-alpha-D-ribose 1-diphosphate-binding positions include 78–79 (YK), Arg-105, Lys-106, Lys-109, His-111, and 130–138 (DDVLTSGKA). Orotate-binding residues include Thr-134 and Arg-163.

It belongs to the purine/pyrimidine phosphoribosyltransferase family. PyrE subfamily. In terms of assembly, homodimer.

The enzyme catalyses orotidine 5'-phosphate + diphosphate = orotate + 5-phospho-alpha-D-ribose 1-diphosphate. The protein operates within pyrimidine metabolism; UMP biosynthesis via de novo pathway; UMP from orotate: step 1/2. In terms of biological role, catalyzes the transfer of a ribosyl phosphate group from 5-phosphoribose 1-diphosphate to orotate, leading to the formation of orotidine monophosphate (OMP). In Cryptococcus neoformans var. neoformans serotype D (strain B-3501A) (Filobasidiella neoformans), this protein is Orotate phosphoribosyltransferase (URA5).